Consider the following 128-residue polypeptide: Large ribosomal subunit protein uL18 (128 aa).

Residues 1–36 form a disordered region; sequence MAKRSSLTRRGVSPRAAARARRHMRVRKKVRGTPER. Residues 18–31 show a composition bias toward basic residues; that stretch reads ARARRHMRVRKKVR.

The protein belongs to the universal ribosomal protein uL18 family. As to quaternary structure, part of the 50S ribosomal subunit; part of the 5S rRNA/L5/L18/L25 subcomplex. Contacts the 5S and 23S rRNAs.

Its function is as follows. This is one of the proteins that bind and probably mediate the attachment of the 5S RNA into the large ribosomal subunit, where it forms part of the central protuberance. The chain is Large ribosomal subunit protein uL18 from Thermobifida fusca (strain YX).